Here is a 319-residue protein sequence, read N- to C-terminus: Taste receptor type 2 member 30 (319 aa).

Residue methionine 1 is a topological domain, extracellular. Residues 2–22 form a helical membrane-spanning segment; the sequence is ITFLPIIFSILIVVIFVIGNF. Residues 23–46 lie on the Cytoplasmic side of the membrane; that stretch reads ANGFIALVNSIEWVKRQKISFVDQ. The helical transmembrane segment at 47 to 67 threads the bilayer; it reads ILTALAVSRVGLLWVLLLHWY. At 68–86 the chain is on the extracellular side; it reads ATQLNPAFYSVEVRITAYN. The helical transmembrane segment at 87-107 threads the bilayer; it reads VWAVTNHFSSWLATSLSMFYL. Residues 108 to 126 lie on the Cytoplasmic side of the membrane; that stretch reads LRIANFSNLIFLRIKRRVK. The chain crosses the membrane as a helical span at residues 127-147; sequence SVVLVILLGPLLFLVCHLFVI. The Extracellular segment spans residues 148-178; the sequence is NMDETVWTKEYEGNVTWKIKLRSAMYHSNMT. N-linked (GlcNAc...) asparagine glycosylation is found at asparagine 161 and asparagine 176. Residues 179 to 199 traverse the membrane as a helical segment; the sequence is LTMLANFVPLTLTLISFLLLI. Residues 200 to 229 are Cytoplasmic-facing; the sequence is CSLCKHLKKMQLHGKGSQDPSTKVHIKALQ. A helical transmembrane segment spans residues 230-250; it reads TVTSFLLLCAIYFLSMIISVC. The Extracellular segment spans residues 251 to 259; sequence NFGRLEKQP. Residues 260-280 traverse the membrane as a helical segment; sequence VFMFCQAIIFSYPSTHPFILI. At 281–319 the chain is on the cytoplasmic side; the sequence is LGNKKLKQIFLSVLRHVRYWVKDRSLRLHRFTRGALCVF.

Belongs to the G-protein coupled receptor T2R family. As to expression, expressed in subsets of taste receptor cells of the tongue and exclusively in gustducin-positive cells.

It is found in the membrane. Its function is as follows. Receptor that may play a role in the perception of bitterness and is gustducin-linked. May play a role in sensing the chemical composition of the gastrointestinal content. The activity of this receptor may stimulate alpha gustducin, mediate PLC-beta-2 activation and lead to the gating of TRPM5. The sequence is that of Taste receptor type 2 member 30 (TAS2R30) from Homo sapiens (Human).